We begin with the raw amino-acid sequence, 351 residues long: Ribosomal RNA large subunit methyltransferase N (351 aa).

Catalysis depends on Glu-92, which acts as the Proton acceptor. Residues Gly-105–Glu-337 enclose the Radical SAM core domain. Residues Cys-112 and Cys-342 are joined by a disulfide bond. Residues Cys-119, Cys-123, and Cys-126 each contribute to the [4Fe-4S] cluster site. S-adenosyl-L-methionine-binding positions include Gly-169–Glu-170, Ser-201, Ser-224–His-226, and Asn-300. Catalysis depends on Cys-342, which acts as the S-methylcysteine intermediate.

It belongs to the radical SAM superfamily. RlmN family. [4Fe-4S] cluster is required as a cofactor.

The protein localises to the cytoplasm. The catalysed reaction is adenosine(2503) in 23S rRNA + 2 reduced [2Fe-2S]-[ferredoxin] + 2 S-adenosyl-L-methionine = 2-methyladenosine(2503) in 23S rRNA + 5'-deoxyadenosine + L-methionine + 2 oxidized [2Fe-2S]-[ferredoxin] + S-adenosyl-L-homocysteine. Specifically methylates position 2 of adenine 2503 in 23S rRNA. In Nitrosopumilus maritimus (strain SCM1), this protein is Ribosomal RNA large subunit methyltransferase N.